We begin with the raw amino-acid sequence, 528 residues long: uncharacterized protein (528 aa).

2 stretches are compositionally biased toward basic residues: residues 1 to 16 (MGKASKATKKFTKNHL) and 25 to 43 (QLARSKKVYGTKNRNSHTK). Residues 1 to 59 (MGKASKATKKFTKNHLKNTIERRKQLARSKKVYGTKNRNSHTKNKLESGTNDNNKNKED) are disordered.

This sequence belongs to the NOC2 family.

The protein resides in the nucleus. Its subcellular location is the nucleolus. This is an uncharacterized protein from Schizosaccharomyces pombe (strain 972 / ATCC 24843) (Fission yeast).